Consider the following 1297-residue polypeptide: MRILRGSPALSEFRVNKLLELCREQDLPVTGIYAEFMHFADLTSELDAEALEKLEKLLTYGPTIEEHEPQGLLLLVTPRPGTISPWSSKATDIAQNCGLNAVKRLERGTAYYVESSSELSSVQIDIVKSIIHDRMMEAVFGDLEAAAALFSVAQPAPMTQVDILSGGRLALEEANVSLGLALAEDEIDYLVENFTKLGRNPNDIELMMFAQANSEHCRHKIFNADWTIDGVEQPKSLFKMIKNTFETTPDHVLSAYKDNAAVMTGSKVGRFFPDPETRQYNYHHEDAHILMKVETHNHPTAISPWPGASTGSGGEIRDEGATGIGGKPKAGLVGFTTSNLRIPGFEQPWETDFGKPGRIVNALDIMLEGPLGGAAFNNEFGRPNLLGYFRTYEEKVTSHAGEEVRGYHKPIMIAGGMGNIRDEHVQKKEIPVGASLIVLGGPAMNIGLGGGAASSMASGQSAEDLDFASVQRENPEMERRCQEVIDRCWQLGDNNPIAFIHDVGAGGISNALPELVNDGERGGKFQLRDVPNDEPGMSPLEIWCNESQERYVLAVAPENMAAFDAICKRERAPYAVVGVATEERHLTLEDAHFDNTPIDMPMDILLGKPPKMHREATTLKVDSPAMTRDGIELNEAVDRVLRLPTVAEKTFLITIGDRTVTGLVARDQMVGPWQVPVANCAVTAASYDTYHGEAMSMGERTPVALLDFGASARLAVGESLTNIAATDIGDIKRIKLSANWMSPAGHPGEDAGLYEAVKAVGEELCPALGLTIPVGKDSMSMKTKWNENGEEKEVTSPLSLIITAFARVEDVRKTITPQLRTDKGETSLVLVDLGNGKNRLGATALAQVYKQLGDKPADVDNAEQLKGFFDAMQALVRQDKLLAYHDKGDGGLLVTLAEMAFAGHCGVNANIAALGDDVLAALFNEELGAVVQVKNDELDSVLSTLAANGLEACSHVIGAIDASDNFVIRSGDAVILERSRTDLRVIWAETTHKMQALRDNPACADQEFEAKKDNSDPGLNVSLSFDVNEDIAAPYIAKGAKPKMAILREQGVNSHVEMAAAFDRAGFEATDIHMSDILTGQAVLDEYHGLVACGGFSYGDVLGAGEGWAKSVLFNAQAREQFQAFFNRENTFSLGVCNGCQMLSNLKELIPGADLWPRFVRNESERFEARFSLVEVQKSDSVFFDGMAGSRMPIAVSHGEGRVEVRDAQHLAAIEASGTVAVRFVDNLGNPTQQYPNNPNGSPNAITGLTTKDGRVTIMMPHPERVFRTVANSWAPEGWGENGAWMRMFQNARKNLG.

ATP-binding positions include 307-318 (GASTGSGGEIRD) and Ala-678. Residues Glu-718, Asn-722, and Asp-886 each contribute to the Mg(2+) site. In terms of domain architecture, Glutamine amidotransferase type-1 spans 1044 to 1297 (MAILREQGVN…MFQNARKNLG (254 aa)). Residue Cys-1137 is the Nucleophile of the active site. Active-site residues include His-1262 and Glu-1264.

In the N-terminal section; belongs to the FGAMS family. As to quaternary structure, monomer.

It localises to the cytoplasm. The enzyme catalyses N(2)-formyl-N(1)-(5-phospho-beta-D-ribosyl)glycinamide + L-glutamine + ATP + H2O = 2-formamido-N(1)-(5-O-phospho-beta-D-ribosyl)acetamidine + L-glutamate + ADP + phosphate + H(+). Its pathway is purine metabolism; IMP biosynthesis via de novo pathway; 5-amino-1-(5-phospho-D-ribosyl)imidazole from N(2)-formyl-N(1)-(5-phospho-D-ribosyl)glycinamide: step 1/2. Its function is as follows. Phosphoribosylformylglycinamidine synthase involved in the purines biosynthetic pathway. Catalyzes the ATP-dependent conversion of formylglycinamide ribonucleotide (FGAR) and glutamine to yield formylglycinamidine ribonucleotide (FGAM) and glutamate. This chain is Phosphoribosylformylglycinamidine synthase, found in Vibrio vulnificus (strain CMCP6).